Reading from the N-terminus, the 629-residue chain is 1-deoxy-D-xylulose-5-phosphate synthase (629 aa).

Residues His-72 and 113-115 (GHA) each bind thiamine diphosphate. Residue Asp-144 participates in Mg(2+) binding. Thiamine diphosphate is bound by residues 145–146 (GA), Asn-174, Tyr-287, and Glu-370. Asn-174 is a Mg(2+) binding site.

The protein belongs to the transketolase family. DXPS subfamily. In terms of assembly, homodimer. Mg(2+) is required as a cofactor. The cofactor is thiamine diphosphate.

It catalyses the reaction D-glyceraldehyde 3-phosphate + pyruvate + H(+) = 1-deoxy-D-xylulose 5-phosphate + CO2. Its pathway is metabolic intermediate biosynthesis; 1-deoxy-D-xylulose 5-phosphate biosynthesis; 1-deoxy-D-xylulose 5-phosphate from D-glyceraldehyde 3-phosphate and pyruvate: step 1/1. Functionally, catalyzes the acyloin condensation reaction between C atoms 2 and 3 of pyruvate and glyceraldehyde 3-phosphate to yield 1-deoxy-D-xylulose-5-phosphate (DXP). The sequence is that of 1-deoxy-D-xylulose-5-phosphate synthase from Prochlorococcus marinus (strain AS9601).